Here is a 335-residue protein sequence, read N- to C-terminus: Ubiquinone biosynthesis protein COQ4, mitochondrial (335 aa).

The N-terminal 10 residues, 1-10, are a transit peptide targeting the mitochondrion; the sequence is MLRLSLLRST. Zn(2+) is bound by residues His-210, Asp-211, His-214, and Glu-226.

Belongs to the COQ4 family. Component of a multi-subunit COQ enzyme complex, composed of at least COQ3, COQ4, COQ5, COQ6, COQ7 and COQ9. Interacts with COQ3. The cofactor is Zn(2+).

The protein resides in the mitochondrion inner membrane. The catalysed reaction is 4-hydroxy-3-methoxy-5-(all-trans-hexaprenyl)benzoate + H(+) = 2-methoxy-6-(all-trans-hexaprenyl)phenol + CO2. The protein operates within cofactor biosynthesis; ubiquinone biosynthesis. Functionally, lyase that catalyzes the C1-decarboxylation of 4-hydroxy-3-methoxy-5-(all-trans-hexaprenyl)benzoic acid into 2-methoxy-6-(all-trans-hexaprenyl)phenol during ubiquinone biosynthesis. This is Ubiquinone biosynthesis protein COQ4, mitochondrial from Saccharomyces cerevisiae (strain RM11-1a) (Baker's yeast).